A 427-amino-acid chain; its full sequence is Dihydroorotase (427 aa).

Zn(2+) contacts are provided by His-58 and His-60. Residues 60-62 (HLR) and Asn-92 each bind substrate. Zn(2+)-binding residues include Asp-150, His-177, and His-230. Substrate is bound at residue Asn-276. Residue Asp-303 coordinates Zn(2+). Asp-303 is a catalytic residue. Substrate-binding positions include His-307 and 321–322 (FG).

This sequence belongs to the metallo-dependent hydrolases superfamily. DHOase family. Class I DHOase subfamily. Zn(2+) serves as cofactor.

It catalyses the reaction (S)-dihydroorotate + H2O = N-carbamoyl-L-aspartate + H(+). It participates in pyrimidine metabolism; UMP biosynthesis via de novo pathway; (S)-dihydroorotate from bicarbonate: step 3/3. Catalyzes the reversible cyclization of carbamoyl aspartate to dihydroorotate. This Macrococcus caseolyticus (strain JCSC5402) (Macrococcoides caseolyticum) protein is Dihydroorotase.